The following is a 447-amino-acid chain: Putative FBD-associated F-box protein At1g61330 (447 aa).

The F-box domain occupies Lys10–Ile57. In terms of domain architecture, FBD spans Val384–Met416.

The chain is Putative FBD-associated F-box protein At1g61330 from Arabidopsis thaliana (Mouse-ear cress).